The chain runs to 305 residues: Acetylglutamate kinase (305 aa).

Residues 78–79 (GG), R100, and N202 contribute to the substrate site.

Belongs to the acetylglutamate kinase family. ArgB subfamily.

It localises to the cytoplasm. It carries out the reaction N-acetyl-L-glutamate + ATP = N-acetyl-L-glutamyl 5-phosphate + ADP. The protein operates within amino-acid biosynthesis; L-arginine biosynthesis; N(2)-acetyl-L-ornithine from L-glutamate: step 2/4. Functionally, catalyzes the ATP-dependent phosphorylation of N-acetyl-L-glutamate. This is Acetylglutamate kinase from Polaromonas sp. (strain JS666 / ATCC BAA-500).